The following is a 394-amino-acid chain: NAD(P)H-quinone oxidoreductase subunit H 2 (394 aa).

This sequence belongs to the complex I 49 kDa subunit family. NDH-1 can be composed of about 15 different subunits; different subcomplexes with different compositions have been identified which probably have different functions.

It is found in the cell inner membrane. It carries out the reaction a plastoquinone + NADH + (n+1) H(+)(in) = a plastoquinol + NAD(+) + n H(+)(out). The enzyme catalyses a plastoquinone + NADPH + (n+1) H(+)(in) = a plastoquinol + NADP(+) + n H(+)(out). In terms of biological role, NDH-1 shuttles electrons from an unknown electron donor, via FMN and iron-sulfur (Fe-S) centers, to quinones in the respiratory and/or the photosynthetic chain. The immediate electron acceptor for the enzyme in this species is believed to be plastoquinone. Couples the redox reaction to proton translocation, and thus conserves the redox energy in a proton gradient. Cyanobacterial NDH-1 also plays a role in inorganic carbon-concentration. The sequence is that of NAD(P)H-quinone oxidoreductase subunit H 2 from Gloeobacter violaceus (strain ATCC 29082 / PCC 7421).